Consider the following 85-residue polypeptide: RNA-binding protein Hfq (85 aa).

The Sm domain occupies D10–V69.

The protein belongs to the Hfq family. Homohexamer.

Its function is as follows. RNA chaperone that binds small regulatory RNA (sRNAs) and mRNAs to facilitate mRNA translational regulation in response to envelope stress, environmental stress and changes in metabolite concentrations. Also binds with high specificity to tRNAs. The protein is RNA-binding protein Hfq of Laribacter hongkongensis (strain HLHK9).